We begin with the raw amino-acid sequence, 603 residues long: Dual specificity protein phosphatase CDC14A (603 aa).

The tract at residues 7 to 162 is a; that stretch reads ELIGACEFMK…GLQHGFFDFE (156 aa). The interval 163–176 is linker; it reads TFDAEEYEHYERVE. Residues 177–343 form a b region; it reads NGDFNWIVPG…QGDIFRSKLK (167 aa). Positions 179–336 constitute a Tyrosine-protein phosphatase domain; the sequence is DFNWIVPGKF…KQASLWVQGD (158 aa). Residue Cys-278 is the Phosphocysteine intermediate of the active site. A Phosphoserine modification is found at Ser-484. Residues 518 to 538 are compositionally biased toward polar residues; it reads NGSTQTPGRNYPELNNNQYTR. The tract at residues 518-583 is disordered; the sequence is NGSTQTPGRN…RPSFPGSLSS (66 aa). 2 stretches are compositionally biased toward low complexity: residues 539-558 and 573-583; these read SSNSNSSSSSSGLGGNLNSS and LRPSFPGSLSS. Ser-592 bears the Phosphoserine mark.

It belongs to the protein-tyrosine phosphatase family. Non-receptor class CDC14 subfamily. In terms of assembly, interacts with KIF20A. Interaction is required to localize CDC14 to the midzone of the mitotic spindle. As to expression, expressed in the inner ear.

Its subcellular location is the nucleus. It is found in the cytoplasm. The protein resides in the cytoskeleton. The protein localises to the microtubule organizing center. It localises to the centrosome. Its subcellular location is the spindle. It is found in the cell projection. The protein resides in the kinocilium. The protein localises to the spindle pole. It localises to the stereocilium. It carries out the reaction O-phospho-L-tyrosyl-[protein] + H2O = L-tyrosyl-[protein] + phosphate. The enzyme catalyses O-phospho-L-seryl-[protein] + H2O = L-seryl-[protein] + phosphate. The catalysed reaction is O-phospho-L-threonyl-[protein] + H2O = L-threonyl-[protein] + phosphate. Functionally, dual-specificity phosphatase. Required for centrosome separation and productive cytokinesis during cell division. Dephosphorylates SIRT2 around early anaphase. May dephosphorylate the APC subunit FZR1/CDH1, thereby promoting APC-FZR1 dependent degradation of mitotic cyclins and subsequent exit from mitosis. Required for normal hearing. The sequence is that of Dual specificity protein phosphatase CDC14A (Cdc14a) from Mus musculus (Mouse).